The following is a 196-amino-acid chain: 3-isopropylmalate dehydratase small subunit (196 aa).

Belongs to the LeuD family. LeuD type 1 subfamily. As to quaternary structure, heterodimer of LeuC and LeuD.

It carries out the reaction (2R,3S)-3-isopropylmalate = (2S)-2-isopropylmalate. It participates in amino-acid biosynthesis; L-leucine biosynthesis; L-leucine from 3-methyl-2-oxobutanoate: step 2/4. In terms of biological role, catalyzes the isomerization between 2-isopropylmalate and 3-isopropylmalate, via the formation of 2-isopropylmaleate. The protein is 3-isopropylmalate dehydratase small subunit of Streptococcus sanguinis (strain SK36).